A 202-amino-acid polypeptide reads, in one-letter code: COMM domain-containing protein 10 (202 aa).

Alanine 2 is modified (N-acetylalanine). The 70-residue stretch at 133-202 folds into the COMM domain; sequence KLETVGWQLN…TIQAQLDSLT (70 aa). At serine 155 the chain carries Phosphoserine.

It belongs to the COMM domain-containing protein 10 family. Component of the commander complex consisting of the CCC subcomplex and the retriever subcomplex. Component of the CCC (COMMD/CCDC22/CCDC93) subcomplex consisting of COMMD1, COMMD2, COMMD3, COMMD4, COMMD5, COMMD6, COMMD7, COMMD8, COMMD9, COMMD10, CCDC22 and CCDC93; within the complex forms a heterodimer with COMMD5. Interacts with RELA, RELB, NFKB1/p105, NFKB2/p100. Interacts with CCDC22, CCDC93, SCNN1B, CUL1, CUL2, CUL3, CUL4A, CUL4B, CUL7. As to expression, ubiquitous.

The protein localises to the cytoplasm. It is found in the nucleus. Functionally, scaffold protein in the commander complex that is essential for endosomal recycling of transmembrane cargos; the commander complex is composed of the CCC subcomplex and the retriever subcomplex. May modulate activity of cullin-RING E3 ubiquitin ligase (CRL) complexes. May down-regulate activation of NF-kappa-B. This Homo sapiens (Human) protein is COMM domain-containing protein 10 (COMMD10).